The following is a 451-amino-acid chain: UDP-N-acetylmuramoylalanine--D-glutamate ligase (451 aa).

Position 116 to 122 (116 to 122 (GTNGKTT)) interacts with ATP.

It belongs to the MurCDEF family.

Its subcellular location is the cytoplasm. The catalysed reaction is UDP-N-acetyl-alpha-D-muramoyl-L-alanine + D-glutamate + ATP = UDP-N-acetyl-alpha-D-muramoyl-L-alanyl-D-glutamate + ADP + phosphate + H(+). The protein operates within cell wall biogenesis; peptidoglycan biosynthesis. Cell wall formation. Catalyzes the addition of glutamate to the nucleotide precursor UDP-N-acetylmuramoyl-L-alanine (UMA). This Clostridioides difficile (strain 630) (Peptoclostridium difficile) protein is UDP-N-acetylmuramoylalanine--D-glutamate ligase.